Here is a 752-residue protein sequence, read N- to C-terminus: Lid2 complex component jmj3 (752 aa).

In terms of domain architecture, JmjN spans 34–75; sequence IPVVEPKISEFVDMESFIRRVERLGKKYGAIKVVRPSSVLNP. In terms of domain architecture, JmjC spans 162–333; it reads YTNRPSIPFY…NYEFSNLRRL (172 aa). Polar residues-rich tracts occupy residues 391-402 and 409-423; these read SFSQRDFDSPNS and LMSNHESASTEHFNS. A disordered region spans residues 391–438; sequence SFSQRDFDSPNSINPPSPLMSNHESASTEHFNSTTTTEKELSSLHVGE. The span at 427 to 438 shows a compositional bias: basic and acidic residues; it reads TEKELSSLHVGE.

Component of the Lid2 complex composed of ash2, jmj3, lid2, sdc1 and snt2.

Its subcellular location is the nucleus. The sequence is that of Lid2 complex component jmj3 from Schizosaccharomyces pombe (strain 972 / ATCC 24843) (Fission yeast).